A 179-amino-acid chain; its full sequence is Acireductone dioxygenase (179 aa).

4 residues coordinate Fe(2+): H99, H101, E105, and H143. Ni(2+) is bound by residues H99, H101, E105, and H143.

The protein belongs to the acireductone dioxygenase (ARD) family. In terms of assembly, monomer. The cofactor is Fe(2+). Ni(2+) is required as a cofactor.

It carries out the reaction 1,2-dihydroxy-5-(methylsulfanyl)pent-1-en-3-one + O2 = 3-(methylsulfanyl)propanoate + CO + formate + 2 H(+). The catalysed reaction is 1,2-dihydroxy-5-(methylsulfanyl)pent-1-en-3-one + O2 = 4-methylsulfanyl-2-oxobutanoate + formate + 2 H(+). Its pathway is amino-acid biosynthesis; L-methionine biosynthesis via salvage pathway; L-methionine from S-methyl-5-thio-alpha-D-ribose 1-phosphate: step 5/6. Its function is as follows. Catalyzes 2 different reactions between oxygen and the acireductone 1,2-dihydroxy-3-keto-5-methylthiopentene (DHK-MTPene) depending upon the metal bound in the active site. Fe-containing acireductone dioxygenase (Fe-ARD) produces formate and 2-keto-4-methylthiobutyrate (KMTB), the alpha-ketoacid precursor of methionine in the methionine recycle pathway. Ni-containing acireductone dioxygenase (Ni-ARD) produces methylthiopropionate, carbon monoxide and formate, and does not lie on the methionine recycle pathway. The sequence is that of Acireductone dioxygenase from Sulfurihydrogenibium sp. (strain YO3AOP1).